The primary structure comprises 93 residues: UPF0473 protein CHY_0543 (93 aa).

Belongs to the UPF0473 family.

The sequence is that of UPF0473 protein CHY_0543 from Carboxydothermus hydrogenoformans (strain ATCC BAA-161 / DSM 6008 / Z-2901).